A 1095-amino-acid polypeptide reads, in one-letter code: Putative patatin-like phospholipase domain-containing protein M110.7 (1095 aa).

Residues 9–29 (LLLIFENILELCMCITLVILI) form a helical membrane-spanning segment. The disordered stretch occupies residues 75–113 (HKKRSSKEEMTPDKKRDSSEKISKQPPRELFEPNEQEQV). Positions 80-105 (SKEEMTPDKKRDSSEKISKQPPRELF) are enriched in basic and acidic residues. A nucleoside 3',5'-cyclic phosphate contacts are provided by residues 144–237 (VETL…LTSF), 327–416 (RKYE…IQFL), and 450–509 (IETG…TVMA). Positions 768-935 (IVFGGGGARG…VNNLPADIMR (168 aa)) constitute a PNPLA domain. A GXGXXG motif is present at residues 772 to 777 (GGGARG). The short motif at 799 to 803 (GTSIG) is the GXSXG element. The active-site Nucleophile is the Ser801. Residue Asp922 is the Proton acceptor of the active site. Residues 922–924 (DGA) carry the DGA/G motif.

Belongs to the NTE family.

The protein resides in the membrane. The sequence is that of Putative patatin-like phospholipase domain-containing protein M110.7 from Caenorhabditis elegans.